Consider the following 179-residue polypeptide: Chymotrypsin inhibitor ECI (179 aa).

Position 1 is a pyrrolidone carboxylic acid (Q1). 2 cysteine pairs are disulfide-bonded: C40/C84 and C134/C143.

This sequence belongs to the protease inhibitor I3 (leguminous Kunitz-type inhibitor) family.

Functionally, inhibition of chymotrypsin. The sequence is that of Chymotrypsin inhibitor ECI from Erythrina variegata (Indian coral tree).